A 498-amino-acid chain; its full sequence is Mitogen-activated protein kinase 15 (498 aa).

One can recognise a Protein kinase domain in the interval 13–304 (YKIEEVIGKG…AEEALADPYF (292 aa)). Residues 19–27 (IGKGSYGVV) and Lys-42 contribute to the ATP site. Residue Asp-139 is the Proton acceptor of the active site. The residue at position 175 (Thr-175) is a Phosphothreonine. Residues 175-177 (TDY) carry the TXY motif. Phosphotyrosine is present on Tyr-177. Disordered stretches follow at residues 388 to 411 (STAA…SDDR) and 470 to 498 (STAE…GSYP). Polar residues predominate over residues 486–498 (LATNTVSPRGSYP).

Belongs to the protein kinase superfamily. CMGC Ser/Thr protein kinase family. MAP kinase subfamily. In terms of processing, dually phosphorylated on Thr-175 and Tyr-177, which activates the enzyme.

The enzyme catalyses L-seryl-[protein] + ATP = O-phospho-L-seryl-[protein] + ADP + H(+). It carries out the reaction L-threonyl-[protein] + ATP = O-phospho-L-threonyl-[protein] + ADP + H(+). Its activity is regulated as follows. Activated by threonine and tyrosine phosphorylation. This is Mitogen-activated protein kinase 15 (MPK15) from Oryza sativa subsp. japonica (Rice).